The primary structure comprises 930 residues: Polypeptide N-acetylgalactosaminyltransferase 5 (930 aa).

The Cytoplasmic segment spans residues 1 to 12 (MNKIRKFFRGSG). A helical; Signal-anchor for type II membrane protein transmembrane segment spans residues 13–35 (RVLAFIFVASVIWLLFDMAALRL). Residues 36 to 930 (SFSEINTGIL…KWKFEKYYDV (895 aa)) lie on the Lumenal side of the membrane. The tract at residues 163 to 210 (GSEKDSFTVSRGVPLNKTAEHTETLDKKQEAPENYNLSSDTSKQASQR) is disordered. An N-linked (GlcNAc...) asparagine glycan is attached at Asn178. The segment covering 180–193 (TAEHTETLDKKQEA) has biased composition (basic and acidic residues). Over residues 197–210 (YNLSSDTSKQASQR) the composition is skewed to polar residues. N-linked (GlcNAc...) asparagine glycosylation is found at Asn198 and Asn213. Position 285 is a phosphoserine (Ser285). N-linked (GlcNAc...) asparagine glycosylation is found at Asn287 and Asn309. Residues 344-377 (LGESQGKHIPRSQSQTLSSPLAPKRAVSQSKPTL) form a disordered region. N-linked (GlcNAc...) asparagine glycosylation is found at Asn387 and Asn403. 3 disulfide bridges follow: Cys476–Cys708, Cys699–Cys779, and Cys812–Cys825. A catalytic subdomain A region spans residues 485 to 594 (LPTTSIIMCF…VGWLEPLLER (110 aa)). Substrate is bound by residues Asp526 and Arg555. An N-linked (GlcNAc...) asparagine glycan is attached at Asn568. Asp578 contacts Mn(2+). Ser579 serves as a coordination point for substrate. Mn(2+) is bound at residue His580. The segment at 654–716 (IIRCPVMAGG…PCSRVGHIFR (63 aa)) is catalytic subdomain B. Trp685 contributes to the substrate binding site. A Mn(2+)-binding site is contributed by His713. Residues Arg716 and Tyr721 each coordinate substrate. N-linked (GlcNAc...) asparagine glycans are attached at residues Asn766, Asn817, and Asn835. One can recognise a Ricin B-type lectin domain in the interval 794-925 (KAPVVRASGV…TEPQQKWKFE (132 aa)). Cystine bridges form between Cys848–Cys863 and Cys898–Cys913. An N-linked (GlcNAc...) asparagine glycan is attached at Asn902.

Belongs to the glycosyltransferase 2 family. GalNAc-T subfamily. Interacts with EXT2. Does not interact with EXT1, EXTL1 or EXTL3. Mn(2+) is required as a cofactor. As to expression, predominantly expressed in sublingual gland. Expressed at lower level in stomach and small intestine. Weakly or not expressed in submandibular gland, parotid gland, kidney, liver, heart, brain, spleen, lung, skeletal muscle, testis, ovary, cervix and uterus.

The protein resides in the golgi apparatus membrane. It carries out the reaction L-seryl-[protein] + UDP-N-acetyl-alpha-D-galactosamine = a 3-O-[N-acetyl-alpha-D-galactosaminyl]-L-seryl-[protein] + UDP + H(+). It catalyses the reaction L-threonyl-[protein] + UDP-N-acetyl-alpha-D-galactosamine = a 3-O-[N-acetyl-alpha-D-galactosaminyl]-L-threonyl-[protein] + UDP + H(+). Its pathway is protein modification; protein glycosylation. Its function is as follows. Catalyzes the initial reaction in O-linked oligosaccharide biosynthesis, the transfer of an N-acetyl-D-galactosamine residue to a serine or threonine residue on the protein receptor. Has activity toward EA2 peptide substrate, but has a weak activity toward Muc2, Muc1b, rMuc-2 or mG-Muc substrates. The protein is Polypeptide N-acetylgalactosaminyltransferase 5 (Galnt5) of Rattus norvegicus (Rat).